The sequence spans 1037 residues: Receptor kinase-like protein Xa21 (1037 aa).

Residues 1-24 (MARSPTSVMISSLLLLLLIGPASS) form the signal peptide. Over 25–665 (DDAAAAAAAR…LLENRKHFPV (641 aa)) the chain is Extracellular. N-linked (GlcNAc...) asparagine glycosylation is found at N66, N101, and N112. 11 LRR repeats span residues 89 to 112 (PHRV…SLGN), 113 to 137 (LSFL…LSRL), 138 to 161 (SRLQ…IGAC), 163 to 185 (KLTS…IGAS), 187 to 210 (KHLS…LGNL), 211 to 234 (TSLQ…LGQL), 236 to 259 (SSLL…IWNL), 260 to 283 (SSLR…AFKT), 285 to 308 (HLLE…VANA), 310 to 331 (HLTQ…GFGR), and 333 to 355 (RNLT…DWGF). N209 carries N-linked (GlcNAc...) asparagine glycosylation. Residues N247 and N258 are each glycosylated (N-linked (GlcNAc...) asparagine). An N-linked (GlcNAc...) asparagine glycan is attached at N307. N-linked (GlcNAc...) asparagine glycosylation is found at N334, N361, and N385. LRR repeat units lie at residues 362 to 385 (CSKL…SFSN), 387 to 411 (STSL…IGNL), 412 to 435 (IGLQ…LGRL), 437 to 459 (NLGI…IGNL), 460 to 482 (TELN…TLSN), 483 to 507 (LTNL…LFNI), 509 to 532 (TLSI…IGHL), 533 to 556 (KNLV…LGDC), 557 to 580 (QLLR…LGQL), 581 to 604 (KGLE…LADI), and 606 to 629 (MLHS…AFAD). N-linked (GlcNAc...) asparagine glycans are attached at residues N447, N458, N482, N495, and N515. N-linked (GlcNAc...) asparagine glycosylation is found at N592 and N611. The helical transmembrane segment at 666-686 (LPISVSLVAALAILSSLYLLI) threads the bilayer. Over 687 to 1037 (TWHKRTKKGA…PVCEGASLEF (351 aa)) the chain is Cytoplasmic. A Nuclear localization signal motif is present at residues 689–694 (HKRTKK). Phosphoserine is present on S698. Phosphothreonine is present on T700. S701 is modified (phosphoserine). T717 bears the Phosphothreonine mark. One can recognise a Protein kinase domain in the interval 720–1019 (FAPTNLLGSG…GDIIDELNAI (300 aa)). ATP contacts are provided by residues 726 to 734 (LGSGSFGSV) and K748. D854 (proton acceptor) is an active-site residue.

The protein belongs to the protein kinase superfamily. Ser/Thr protein kinase family. As to quaternary structure, interacts with WRKY62/XB10 in the nucleus. Interacts with SERK2. Requires Mn(2+) as cofactor. Mg(2+) is required as a cofactor. Undergoes protein cleavage upon X.oryzae pv. oryzae protein Ax21 detection, thus releasing the processed protein kinase Xa21 chain. Post-translationally, autophosphorylated on serine and threonine residues; these phosphorylation prevents proteolytic degradation.

It is found in the cell membrane. It localises to the endoplasmic reticulum membrane. Its subcellular location is the nucleus. It carries out the reaction L-seryl-[protein] + ATP = O-phospho-L-seryl-[protein] + ADP + H(+). It catalyses the reaction L-threonyl-[protein] + ATP = O-phospho-L-threonyl-[protein] + ADP + H(+). Functionally, receptor kinase that detects X.oryzae pv. oryzae protein Ax21 to promote innate immunity. Following X.oryzae pv. oryzae protein Ax21 detection, undergoes cleavage, releasing the processed protein kinase Xa21 chain. In terms of biological role, the processed protein kinase Xa21 chain released by protein cleavage after X.oryzae pv. oryzae protein Ax21 detection translocates into the nucleus where it can bind and regulate WRKY62, a transcription factor. Confers resistance to the bacterial pathogen X.oryzae pv. oryzae (Xoo). In Oryza sativa subsp. japonica (Rice), this protein is Receptor kinase-like protein Xa21.